The following is a 1274-amino-acid chain: ABC multidrug transporter E (1274 aa).

N48 carries N-linked (GlcNAc...) asparagine glycosylation. Positions 120-344 (FCFRVTGLRV…IASPLIIVSK (225 aa)) constitute an ABC transmembrane type-1 1 domain. 4 consecutive transmembrane segments (helical) span residues 183 to 203 (LALL…LTLV), 205 to 225 (SSAL…MTKI), 280 to 300 (IFGI…SLAF), and 321 to 341 (VFFS…PLII). The 253-residue stretch at 377–629 (IIFRDVRFTY…EGGVYRDLVN (253 aa)) folds into the ABC transporter 1 domain. 412–419 (GPSGSGKS) contributes to the ATP binding site. N473 and N580 each carry an N-linked (GlcNAc...) asparagine glycan. A run of 2 helical transmembrane segments spans residues 697 to 717 (VAVL…SWLF) and 737 to 757 (FWAL…STVG). The region spanning 697-984 (VAVLISTAGA…FFSFASNFAQ (288 aa)) is the ABC transmembrane type-1 2 domain. A glycan (N-linked (GlcNAc...) asparagine) is linked at N792. The next 3 helical transmembrane spans lie at 818 to 838 (FPLI…SFGW), 840 to 860 (LSLV…FMRI), and 924 to 944 (LIFA…FWYG). Residues 1023-1269 (VEFHDVSFRY…KGTYWQMVSS (247 aa)) enclose the ABC transporter 2 domain. An N-linked (GlcNAc...) asparagine glycan is attached at N1044. 1057–1064 (GPSGCGKT) contacts ATP. An N-linked (GlcNAc...) asparagine glycan is attached at N1117.

The protein belongs to the ABC transporter superfamily. ABCB family. Multidrug resistance exporter (TC 3.A.1.201) subfamily.

It is found in the cell membrane. Its function is as follows. Pleiotropic ABC efflux transporter that may be involved in A.fumigatus adaptation to azoles such as vorizonazole. The sequence is that of ABC multidrug transporter E from Aspergillus fumigatus (strain ATCC MYA-4609 / CBS 101355 / FGSC A1100 / Af293) (Neosartorya fumigata).